Here is a 1190-residue protein sequence, read N- to C-terminus: Tight junction protein 2 (1190 aa).

Residue Ser-16 is modified to Phosphoserine. One can recognise a PDZ 1 domain in the interval 33–120; the sequence is TVTLQKDSKR…VAAIVVKRPR (88 aa). Ser-130, Ser-150, Ser-153, Ser-163, Ser-168, Ser-170, Ser-174, Ser-200, Ser-220, Ser-232, Ser-244, Ser-266, Ser-325, Ser-398, Ser-400, Ser-406, Ser-415, Ser-424, Ser-430, and Ser-431 each carry phosphoserine. A disordered region spans residues 152–306; it reads RSGYSERSRL…PEPRGRPGPI (155 aa). The span at 169–291 shows a compositional bias: basic and acidic residues; sequence RSWEDSPERG…PRSRSREHPH (123 aa). Residues 307–385 form the PDZ 2 domain; that stretch reads GVLLMKSRAN…KLQLVVLRDS (79 aa). The tract at residues 408–506 is disordered; the sequence is IESNRSFSPE…RPSPEDEAIY (99 aa). Positions 415–446 are enriched in basic and acidic residues; it reads SPEERRHQYSDYDYHSSSEKLKERPSSREDTP. At Thr-455 the chain carries Phosphothreonine. Ser-499 carries the post-translational modification Phosphoserine. Residues 509 to 590 form the PDZ 3 domain; that stretch reads NTKMVRFKKG…GEMVTILAQS (82 aa). At Tyr-574 the chain carries Phosphotyrosine. Residues 604-669 form the SH3 domain; it reads GDSFFIRSHF…PNKSRAEQMA (66 aa). Residues 678–876 enclose the Guanylate kinase-like domain; that stretch reads NAGDRADFWR…WFGSLKDTIQ (199 aa). Phosphoserine is present on residues Ser-702 and Ser-902. A Phosphothreonine modification is found at Thr-905. A phosphoserine mark is found at Ser-913 and Ser-920. Disordered stretches follow at residues 920–1079 and 1105–1190; these read SDFE…KSVL and NARI…DTEL. 2 positions are modified to phosphothreonine: Thr-925 and Thr-933. A compositionally biased stretch (basic and acidic residues) spans 956–967; it reads VQHEESIRKPSP. 6 positions are modified to phosphoserine: Ser-966, Ser-978, Ser-986, Ser-1006, Ser-1067, and Ser-1068. A compositionally biased stretch (basic and acidic residues) spans 994–1014; that stretch reads EPPKAKTQNKEESYDFSKSYE. The span at 1060–1072 shows a compositional bias: acidic residues; the sequence is EGEEVGESSEEQD. Tyr-1118 is modified (phosphotyrosine). Phosphothreonine is present on Thr-1131. 2 positions are modified to phosphoserine: Ser-1147 and Ser-1159. Over residues 1166–1175 the composition is skewed to basic and acidic residues; sequence YRQQLSEHSK. Residues 1188–1190 are interaction with SCRIB; the sequence is TEL.

Belongs to the MAGUK family. As to quaternary structure, homodimer. Interacts (via PDZ2 domain) with TJP1/ZO1 (via PDZ2 domain). Interacts with OCLN. Interacts with UBN1. Interacts with SAFB in the nucleus. Interacts with SCRIB. Interacts with USP53 (via the C-terminal region). Interacts with claudins, including CLDN1, CLDN2, CLDN3, CLDN5 and CLDN7. Interacts with CLDN18. Interacts (via N-terminus) with CTNNA1. As to expression, this protein is found in epithelial cell junctions. Isoform A1 is abundant in the heart and brain. Detected in brain and skeletal muscle. It is present almost exclusively in normal tissues. Isoform C1 is expressed at high level in the kidney, pancreas, heart and placenta. Not detected in brain and skeletal muscle. Found in normal as well as in most neoplastic tissues.

It is found in the cell junction. It localises to the adherens junction. Its subcellular location is the cell membrane. The protein localises to the tight junction. The protein resides in the nucleus. Functionally, plays a role in tight junctions and adherens junctions. Acts as a positive regulator of RANKL-induced osteoclast differentiation, potentially via mediating downstream transcriptional activity. The polypeptide is Tight junction protein 2 (Homo sapiens (Human)).